The primary structure comprises 190 residues: Iron-sulfur assembly protein 1 (190 aa).

Positions 49–71 (PSLKPSAAGSGSTAPKPVTEREI) are disordered. Residues cysteine 116, cysteine 180, and cysteine 182 each coordinate Fe cation.

The protein belongs to the HesB/IscA family.

The protein localises to the mitochondrion matrix. In terms of biological role, involved in the assembly of mitochondrial and cytoplasmic iron-sulfur proteins. Probably involved in the binding of an intermediate of Fe/S cluster assembly. This is Iron-sulfur assembly protein 1 (isa1) from Schizosaccharomyces pombe (strain 972 / ATCC 24843) (Fission yeast).